Consider the following 197-residue polypeptide: Holliday junction branch migration complex subunit RuvA (197 aa).

The segment at 1 to 65 (MISQVRGTIM…EDAWHLYGFA (65 aa)) is domain I. The domain II stretch occupies residues 66-140 (HAYERAVFQK…DKIDAVGPAP (75 aa)). Residues 140–144 (PATGT) form a flexible linker region. The tract at residues 145–197 (APSPLGDDAVRALIALGYNQTEADRAVRAVVESGAPKDVSSLVRGALSRLTAK) is domain III.

The protein belongs to the RuvA family. Homotetramer. Forms an RuvA(8)-RuvB(12)-Holliday junction (HJ) complex. HJ DNA is sandwiched between 2 RuvA tetramers; dsDNA enters through RuvA and exits via RuvB. An RuvB hexamer assembles on each DNA strand where it exits the tetramer. Each RuvB hexamer is contacted by two RuvA subunits (via domain III) on 2 adjacent RuvB subunits; this complex drives branch migration. In the full resolvosome a probable DNA-RuvA(4)-RuvB(12)-RuvC(2) complex forms which resolves the HJ.

It localises to the cytoplasm. The RuvA-RuvB-RuvC complex processes Holliday junction (HJ) DNA during genetic recombination and DNA repair, while the RuvA-RuvB complex plays an important role in the rescue of blocked DNA replication forks via replication fork reversal (RFR). RuvA specifically binds to HJ cruciform DNA, conferring on it an open structure. The RuvB hexamer acts as an ATP-dependent pump, pulling dsDNA into and through the RuvAB complex. HJ branch migration allows RuvC to scan DNA until it finds its consensus sequence, where it cleaves and resolves the cruciform DNA. The sequence is that of Holliday junction branch migration complex subunit RuvA from Gemmatimonas aurantiaca (strain DSM 14586 / JCM 11422 / NBRC 100505 / T-27).